The chain runs to 137 residues: ER-derived vesicles protein erv14 (137 aa).

The Cytoplasmic segment spans residues Met1–Tyr9. Residues Ile10–Phe30 form a helical membrane-spanning segment. Residues Ser31–Thr62 are Extracellular-facing. A helical membrane pass occupies residues Leu63–Phe83. Residues His84 to Lys114 are Cytoplasmic-facing. A helical transmembrane segment spans residues Val115–Gln135. Over Glu136 to Glu137 the chain is Extracellular.

Belongs to the cornichon family.

The protein localises to the endoplasmic reticulum. It localises to the membrane. Its subcellular location is the golgi apparatus membrane. Regulates export of the secretory proteins from the endoplasmic reticulum in COPII-coated vesicles. The protein is ER-derived vesicles protein erv14 (erv14) of Schizosaccharomyces pombe (strain 972 / ATCC 24843) (Fission yeast).